Here is a 437-residue protein sequence, read N- to C-terminus: Putative galacturan 1,4-alpha-galacturonidase A (437 aa).

The N-terminal stretch at Met1–Ala20 is a signal peptide. N-linked (GlcNAc...) asparagine glycosylation is found at Asn30, Asn101, Asn110, Asn161, Asn196, and Asn203. One copy of the PbH1 1 repeat lies at Ser222–Pro243. The active-site Proton donor is Asp236. 8 N-linked (GlcNAc...) asparagine glycosylation sites follow: Asn244, Asn252, Asn278, Asn324, Asn352, Asn371, Asn382, and Asn387. PbH1 repeat units follow at residues Ser245 to Ser265, Val276 to Ser302, and Val322 to Thr343. The cysteines at positions 396 and 402 are disulfide-linked.

This sequence belongs to the glycosyl hydrolase 28 family.

The protein resides in the secreted. It carries out the reaction [(1-&gt;4)-alpha-D-galacturonosyl](n) + H2O = alpha-D-galacturonate + [(1-&gt;4)-alpha-D-galacturonosyl](n-1). Functionally, specific in hydrolyzing the terminal glycosidic bond of polygalacturonic acid and oligogalacturonates. The sequence is that of Putative galacturan 1,4-alpha-galacturonidase A (rgxA) from Aspergillus flavus (strain ATCC 200026 / FGSC A1120 / IAM 13836 / NRRL 3357 / JCM 12722 / SRRC 167).